A 103-amino-acid polypeptide reads, in one-letter code: Omega toxin Ap5 (103 aa).

An N-terminal signal peptide occupies residues 1–22 (MNTIQVILFAVVLVLTVTVGQA). The propeptide occupies 23 to 57 (DEDSAETSLLRKLEEAEASMFGQYLEESKNSREKR). 3 cysteine pairs are disulfide-bonded: Cys-58–Cys-73, Cys-65–Cys-78, and Cys-72–Cys-93.

Belongs to the neurotoxin 14 (magi-1) family. 08 (Ltx-4) subfamily. In terms of tissue distribution, expressed by the venom duct.

It localises to the secreted. Functionally, shows a weak inhibition on the voltage-gated calcium channel Cav2.1/CACNA1A and some voltage-gated sodium channels (with 1 uM toxin tested: 22.08% inhibition on Cav2.1/CACNA1A, 6.6% on Nav1.1/SCN1A, 4.2% on Nav1.5, and 16% on Nav1.7). Its function is as follows. Shows a weak inhibition on the voltage-gated calcium channel Cav2.1/CACNA1A (28.06% at 1 uM). The chain is Omega toxin Ap5 from Acanthoscurria paulensis (Brazilian giant black tarantula spider).